The chain runs to 551 residues: Formate--tetrahydrofolate ligase (551 aa).

61-68 (TPAGEGKS) contributes to the ATP binding site.

It belongs to the formate--tetrahydrofolate ligase family.

It catalyses the reaction (6S)-5,6,7,8-tetrahydrofolate + formate + ATP = (6R)-10-formyltetrahydrofolate + ADP + phosphate. It participates in one-carbon metabolism; tetrahydrofolate interconversion. This Lactiplantibacillus plantarum (strain ATCC BAA-793 / NCIMB 8826 / WCFS1) (Lactobacillus plantarum) protein is Formate--tetrahydrofolate ligase.